The chain runs to 414 residues: Serine/threonine transporter SstT (414 aa).

The next 8 membrane-spanning stretches (helical) occupy residues 16–36 (GSLV…AWIS), 46–66 (LGTL…LMLV), 84–104 (ILFL…VFSF), 143–163 (ALLN…GFAL), 180–200 (AVTF…FGLV), 219–239 (LVVL…LLVF), 300–320 (MAGA…TLGV), and 332–352 (VVAS…LLLI).

It belongs to the dicarboxylate/amino acid:cation symporter (DAACS) (TC 2.A.23) family.

Its subcellular location is the cell inner membrane. It carries out the reaction L-serine(in) + Na(+)(in) = L-serine(out) + Na(+)(out). The catalysed reaction is L-threonine(in) + Na(+)(in) = L-threonine(out) + Na(+)(out). Functionally, involved in the import of serine and threonine into the cell, with the concomitant import of sodium (symport system). The chain is Serine/threonine transporter SstT from Salmonella schwarzengrund (strain CVM19633).